The chain runs to 154 residues: Transcriptional repressor NrdR (154 aa).

The segment at 3–34 is a zinc-finger region; that stretch reads CPFCGANDTKVIDSRLVAEGEQVRRRRECLAC. An ATP-cone domain is found at 49–139; it reads PRLIKTDGSR…VYRRFQDLNE (91 aa).

It belongs to the NrdR family. Zn(2+) serves as cofactor.

Negatively regulates transcription of bacterial ribonucleotide reductase nrd genes and operons by binding to NrdR-boxes. The sequence is that of Transcriptional repressor NrdR from Pseudomonas fluorescens (strain Pf0-1).